The following is a 189-amino-acid chain: Ribosome maturation factor RimM (189 aa).

The PRC barrel domain occupies 95-169; sequence DEDEFFQTDL…IIKVEPHAAG (75 aa). The disordered stretch occupies residues 168 to 189; that stretch reads AGLIADEHDNPPHESGKKPKKP. Residues 172–189 show a composition bias toward basic and acidic residues; the sequence is ADEHDNPPHESGKKPKKP.

The protein belongs to the RimM family. In terms of assembly, binds ribosomal protein uS19.

Its subcellular location is the cytoplasm. An accessory protein needed during the final step in the assembly of 30S ribosomal subunit, possibly for assembly of the head region. Essential for efficient processing of 16S rRNA. May be needed both before and after RbfA during the maturation of 16S rRNA. It has affinity for free ribosomal 30S subunits but not for 70S ribosomes. The polypeptide is Ribosome maturation factor RimM (Brucella abortus (strain S19)).